The following is a 493-amino-acid chain: MTLVDKFVTHVISESSFEEMDRIYLTNRVLARVGEGVLEVETNLDKLIDLKDQLVEEAVRLETIEDSQTAREILGTELMDLVTPCPSQVNRDFWEAYAYSPEQAIEDFYQLSQKNDYIKLKAIAKNIAYRVPSDYGELEITINLSKPEKDPKEIAVAKLVQASNYPQCQLCLENEGYHGRVNHPARSNHRIIRFEMVGQEWGFQYSPYAYFNEHCIFLDGQHRPMAISRQSFERLLAIVEQFPGYFAGSNADLPIVGGSILTHDHYQGGRHVFPMELAPLQKTFRFAGFEQVKAGIIKWPMSVLRLTSDSKEDLINLADKIFQEWRQYSDSSVQILAETDGTPHHTITPIARKRDGQFELDLVLRDNQTSAEHPDGIYHPHKDVQHIKKENIGLIEVMGLAILPPRLKEEVEQVASYLVGEAVTVADYHQEWADQLKSQHPDLTDKEKALAIVKDSVGAIFVRVLEDAGVYKQTEQGQTAFMRFVEQVGISLD.

It belongs to the galactose-1-phosphate uridylyltransferase type 2 family.

It localises to the cytoplasm. The catalysed reaction is alpha-D-galactose 1-phosphate + UDP-alpha-D-glucose = alpha-D-glucose 1-phosphate + UDP-alpha-D-galactose. The protein operates within carbohydrate metabolism; galactose metabolism. This chain is Galactose-1-phosphate uridylyltransferase, found in Streptococcus pneumoniae (strain CGSP14).